The sequence spans 701 residues: Protein mono-ADP-ribosyltransferase PARP12 (701 aa).

3 C3H1-type zinc fingers span residues 94–119 (LCRF…HSLT), 150–179 (WLLP…IKLH), and 180–202 (ICQY…HDFS). The disordered stretch occupies residues 234 to 268 (KNKSSAPSRVPPLFVPQGTSERKDSSGSVSPNTLS). A Phosphoserine modification is found at Ser-258. Over residues 259–268 (SGSVSPNTLS) the composition is skewed to polar residues. 2 C3H1-type zinc fingers span residues 270–297 (EEGD…HFHL) and 271–296 (EGDQ…VHFH). WWE domains are found at residues 298–361 (PYRW…RLST) and 364–458 (SVTK…KVCR). Position 474 is an ADP-ribosylcysteine (Cys-474). Positions 484 to 698 (IPDYWDSSAL…ILLALGSLFS (215 aa)) constitute a PARP catalytic domain. An ADP-ribosyl aspartic acid mark is found at Asp-600 and Asp-611.

The protein belongs to the ARTD/PARP family. As to quaternary structure, interacts with PARP11; this interaction plays a key role in zika virus suppression. Interacts with ISG15. Auto-mono-ADP-ribosylated. Post-translationally, phosphorylated by PRKD1.

The protein resides in the nucleus. It localises to the golgi apparatus. It is found in the trans-Golgi network. Its subcellular location is the cytoplasm. The protein localises to the stress granule. It catalyses the reaction L-aspartyl-[protein] + NAD(+) = 4-O-(ADP-D-ribosyl)-L-aspartyl-[protein] + nicotinamide. The enzyme catalyses L-cysteinyl-[protein] + NAD(+) = S-(ADP-D-ribosyl)-L-cysteinyl-[protein] + nicotinamide + H(+). Its function is as follows. Mono-ADP-ribosyltransferase that mediates mono-ADP-ribosylation of target proteins. Acts as an antiviral factor by cooperating with PARP11 to suppress Zika virus replication. Displays anti-alphavirus activity during IFN-gamma immune activation by directly ADP-ribosylating the alphaviral non-structural proteins nsP3 and nsP4. Acts as a component of the PRKD1-driven regulatory cascade that selectively controls a major branch of the basolateral transport pathway by catalyzing the MARylation of GOLGA1. Acts also as a key regulator of mitochondrial function, protein translation, and inflammation. Inhibits PINK1/Parkin-dependent mitophagy and promotes cartilage degeneration by inhibiting the ubiquitination and SUMOylation of MFN1/2 by upregulating ISG15 and ISGylation. In Homo sapiens (Human), this protein is Protein mono-ADP-ribosyltransferase PARP12.